A 295-amino-acid chain; its full sequence is Bifunctional protein FolD (295 aa).

Residues 167-169, serine 192, and isoleucine 233 each bind NADP(+); that span reads GRS.

It belongs to the tetrahydrofolate dehydrogenase/cyclohydrolase family. As to quaternary structure, homodimer.

The catalysed reaction is (6R)-5,10-methylene-5,6,7,8-tetrahydrofolate + NADP(+) = (6R)-5,10-methenyltetrahydrofolate + NADPH. The enzyme catalyses (6R)-5,10-methenyltetrahydrofolate + H2O = (6R)-10-formyltetrahydrofolate + H(+). It participates in one-carbon metabolism; tetrahydrofolate interconversion. Catalyzes the oxidation of 5,10-methylenetetrahydrofolate to 5,10-methenyltetrahydrofolate and then the hydrolysis of 5,10-methenyltetrahydrofolate to 10-formyltetrahydrofolate. The chain is Bifunctional protein FolD from Paramagnetospirillum magneticum (strain ATCC 700264 / AMB-1) (Magnetospirillum magneticum).